The chain runs to 434 residues: ATP-dependent protease ATPase subunit HslU (434 aa).

ATP-binding positions include I18, 60–65 (GVGKTE), D247, E312, and R384.

This sequence belongs to the ClpX chaperone family. HslU subfamily. As to quaternary structure, a double ring-shaped homohexamer of HslV is capped on each side by a ring-shaped HslU homohexamer. The assembly of the HslU/HslV complex is dependent on binding of ATP.

It is found in the cytoplasm. ATPase subunit of a proteasome-like degradation complex; this subunit has chaperone activity. The binding of ATP and its subsequent hydrolysis by HslU are essential for unfolding of protein substrates subsequently hydrolyzed by HslV. HslU recognizes the N-terminal part of its protein substrates and unfolds these before they are guided to HslV for hydrolysis. The chain is ATP-dependent protease ATPase subunit HslU from Brucella suis (strain ATCC 23445 / NCTC 10510).